Consider the following 89-residue polypeptide: Small ribosomal subunit protein uS15 (89 aa).

This sequence belongs to the universal ribosomal protein uS15 family. As to quaternary structure, part of the 30S ribosomal subunit. Forms a bridge to the 50S subunit in the 70S ribosome, contacting the 23S rRNA.

Its function is as follows. One of the primary rRNA binding proteins, it binds directly to 16S rRNA where it helps nucleate assembly of the platform of the 30S subunit by binding and bridging several RNA helices of the 16S rRNA. Functionally, forms an intersubunit bridge (bridge B4) with the 23S rRNA of the 50S subunit in the ribosome. This is Small ribosomal subunit protein uS15 from Sodalis glossinidius (strain morsitans).